The following is a 91-amino-acid chain: Succinate dehydrogenase assembly factor 1A, mitochondrial (91 aa).

Belongs to the complex I LYR family. SDHAF1 subfamily. Interacts with the iron-sulfur protein subunit within the SDH catalytic dimer.

Its subcellular location is the mitochondrion matrix. In terms of biological role, plays an essential role in the assembly of succinate dehydrogenase (SDH), an enzyme complex (also referred to as respiratory complex II) that is a component of both the tricarboxylic acid (TCA) cycle and the mitochondrial electron transport chain, and which couples the oxidation of succinate to fumarate with the reduction of ubiquinone (coenzyme Q) to ubiquinol. Promotes maturation of the iron-sulfur protein subunit of the SDH catalytic dimer, protecting it from the deleterious effects of oxidants. May act together with SDHAF3. In Dictyostelium discoideum (Social amoeba), this protein is Succinate dehydrogenase assembly factor 1A, mitochondrial.